A 216-amino-acid chain; its full sequence is Somatotropin (216 aa).

The signal sequence occupies residues 1-25; that stretch reads MAPGSWFSPLLIAVVTLGLPQGAAA. H45 contacts Zn(2+). Residues C78 and C189 are joined by a disulfide bond. E198 is a Zn(2+) binding site. C206 and C214 form a disulfide bridge.

Belongs to the somatotropin/prolactin family. Pituitary gland.

It localises to the secreted. Growth hormone plays an important role in growth control. The chain is Somatotropin (GH) from Meleagris gallopavo (Wild turkey).